An 87-amino-acid polypeptide reads, in one-letter code: Small ribosomal subunit protein bS20 (87 aa).

Residues 1 to 27 (MANIKSAKKRALQSEKRRQHNASRRSM) are disordered.

It belongs to the bacterial ribosomal protein bS20 family.

In terms of biological role, binds directly to 16S ribosomal RNA. The polypeptide is Small ribosomal subunit protein bS20 (Aeromonas hydrophila subsp. hydrophila (strain ATCC 7966 / DSM 30187 / BCRC 13018 / CCUG 14551 / JCM 1027 / KCTC 2358 / NCIMB 9240 / NCTC 8049)).